Consider the following 196-residue polypeptide: Pyridoxal 5'-phosphate synthase subunit PdxT (196 aa).

56-58 contributes to the L-glutamine binding site; it reads GES. Cys-85 functions as the Nucleophile in the catalytic mechanism. Residues Arg-113 and 141–142 contribute to the L-glutamine site; that span reads IR. Active-site charge relay system residues include His-177 and Glu-179.

The protein belongs to the glutaminase PdxT/SNO family. In the presence of PdxS, forms a dodecamer of heterodimers. Only shows activity in the heterodimer.

It catalyses the reaction aldehydo-D-ribose 5-phosphate + D-glyceraldehyde 3-phosphate + L-glutamine = pyridoxal 5'-phosphate + L-glutamate + phosphate + 3 H2O + H(+). The catalysed reaction is L-glutamine + H2O = L-glutamate + NH4(+). It participates in cofactor biosynthesis; pyridoxal 5'-phosphate biosynthesis. Functionally, catalyzes the hydrolysis of glutamine to glutamate and ammonia as part of the biosynthesis of pyridoxal 5'-phosphate. The resulting ammonia molecule is channeled to the active site of PdxS. The polypeptide is Pyridoxal 5'-phosphate synthase subunit PdxT (Methanospirillum hungatei JF-1 (strain ATCC 27890 / DSM 864 / NBRC 100397 / JF-1)).